Consider the following 122-residue polypeptide: Large ribosomal subunit protein uL18 (122 aa).

This sequence belongs to the universal ribosomal protein uL18 family. Part of the 50S ribosomal subunit; part of the 5S rRNA/L5/L18/L25 subcomplex. Contacts the 5S and 23S rRNAs.

Functionally, this is one of the proteins that bind and probably mediate the attachment of the 5S RNA into the large ribosomal subunit, where it forms part of the central protuberance. This is Large ribosomal subunit protein uL18 from Citrifermentans bemidjiense (strain ATCC BAA-1014 / DSM 16622 / JCM 12645 / Bem) (Geobacter bemidjiensis).